Reading from the N-terminus, the 367-residue chain is Apurinic-apyrimidinic endonuclease 1 (367 aa).

The Zn(2+) site is built by H83, H123, E158, D192, H195, H229, D242, H244, and E274. The interval 312-367 (DTLQKLGAKSRKEQLDKFEVKQKKRAGGTKRKKATAEPSDNDILSQMTKKRKTKKE) is disordered. Positions 321 to 332 (SRKEQLDKFEVK) are enriched in basic and acidic residues. Basic residues predominate over residues 333 to 344 (QKKRAGGTKRKK). S356 is subject to Phosphoserine.

Belongs to the AP endonuclease 2 family. Monomer. Zn(2+) serves as cofactor.

It localises to the nucleus. Functionally, DNA repair enzyme that cleaves apurinic/apyrimidinic (AP) sites and removes 3'-blocking groups present at single strand breaks of damaged DNA. APN1 accounts for &gt; 97% of both apurinic/apyrimidinic (AP) endonuclease and DNA 3'-repair diesterase activities. The chain is Apurinic-apyrimidinic endonuclease 1 (APN1) from Saccharomyces cerevisiae (strain ATCC 204508 / S288c) (Baker's yeast).